The following is a 552-amino-acid chain: HTH-type transcriptional regulator SgrR (552 aa).

An HTH marR-type domain is found at 1–116 (MPSGRLQQQF…LISHLGRSFR (116 aa)). The H-T-H motif DNA-binding region spans 26-49 (LNELADLLNCSRRHMRTLLNTMQA). Residues 163–493 (ELEADIAHHW…RDWQGDAAQW (331 aa)) are solute-binding.

Its function is as follows. Activates the small RNA gene sgrS under glucose-phosphate stress conditions as well as yfdZ. Represses its own transcription under both stress and non-stress conditions. Might act as a sensor of the intracellular accumulation of phosphoglucose by binding these molecules in its C-terminal solute-binding domain. This chain is HTH-type transcriptional regulator SgrR, found in Salmonella typhimurium (strain LT2 / SGSC1412 / ATCC 700720).